We begin with the raw amino-acid sequence, 104 residues long: Probable RNA-binding protein PA4753 (104 aa).

Positions 1-97 constitute a CRM domain; the sequence is MALTQEQKKQ…NPKPNKNLSN (97 aa).

This is Probable RNA-binding protein PA4753 from Pseudomonas aeruginosa (strain ATCC 15692 / DSM 22644 / CIP 104116 / JCM 14847 / LMG 12228 / 1C / PRS 101 / PAO1).